We begin with the raw amino-acid sequence, 797 residues long: Discoidin domain-containing receptor tyrosine kinase B (797 aa).

Residues 1–19 (MKLLLYLFGVTFHSNTVVA) form the signal peptide. The Extracellular portion of the chain corresponds to 20–384 (LELRECSHQL…VTEHDDGTSM (365 aa)). In terms of domain architecture, F5/8 type C spans 25 to 181 (CSHQLGMSNR…VCMRVEVFGC (157 aa)). An intrachain disulfide couples Cys25 to Cys181. Residues 46-66 (SFDLQSTGPQHARAHQESGSG) are disordered. Residues Asn141, Asn167, Asn264, and Asn353 are each glycosylated (N-linked (GlcNAc...) asparagine). The helical transmembrane segment at 385-405 (FAFIIFFFMFLIVAVIILTVL) threads the bilayer. The Cytoplasmic segment spans residues 406–797 (YRKREYRVKA…LVHTSPHIHF (392 aa)). Residues 527–785 (LICVSRIGQG…PSFENVHLHL (259 aa)) enclose the Protein kinase domain. ATP-binding positions include 533–541 (IGQGEFGEV) and Lys554. Asp645 serves as the catalytic Proton acceptor.

It belongs to the protein kinase superfamily. Tyr protein kinase family. Insulin receptor subfamily. Interacts with shc-1. Post-translationally, autophosphorylated on tyrosine residues. N-glycosylation at Asn-141 is required for axon regeneration after injury but is dispensable for kinase activity and axon localization. Expressed in some neurons in head and tail, some motoneurons in ventral nerve cord, in PVP interneurons, seam cells, rectal gland cells, vulva cells and some non-neuronal cells in the tail. Expressed in D-type motor neurons.

The protein localises to the cell membrane. The protein resides in the cell projection. It localises to the axon. It is found in the perikaryon. It catalyses the reaction L-tyrosyl-[protein] + ATP = O-phospho-L-tyrosyl-[protein] + ADP + H(+). In terms of biological role, tyrosine-protein kinase receptor which, together with ddr-1, is involved in axon guidance to establish the tracts for the ventral and dorsal nerve cords during nervous system development. Acts upstream of the adapter shc-1, and the tyrosine kinase receptors svh-1 and svh-2 to regulate axon regeneration following injury in D-type motor neurons. May mediate axon regeneration in association with the collagen emb-9. The sequence is that of Discoidin domain-containing receptor tyrosine kinase B from Caenorhabditis elegans.